A 101-amino-acid polypeptide reads, in one-letter code: Small ribosomal subunit protein uS14 (101 aa).

The protein belongs to the universal ribosomal protein uS14 family. As to quaternary structure, part of the 30S ribosomal subunit. Contacts proteins S3 and S10.

Functionally, binds 16S rRNA, required for the assembly of 30S particles and may also be responsible for determining the conformation of the 16S rRNA at the A site. The chain is Small ribosomal subunit protein uS14 from Acinetobacter baylyi (strain ATCC 33305 / BD413 / ADP1).